A 63-amino-acid polypeptide reads, in one-letter code: Large ribosomal subunit protein uL29 (63 aa).

Belongs to the universal ribosomal protein uL29 family.

The chain is Large ribosomal subunit protein uL29 from Sulfurovum sp. (strain NBC37-1).